The sequence spans 85 residues: MADDHPQDQAEHERIFKCFDANGDGKISASELGDALKTLGSVTPDEVKHMMAEIDTDGDGFISFQEFTNFARANRGLVKDVAKIF.

2 EF-hand domains span residues 7–42 (QDQA…LGSV) and 45–77 (DEVK…NRGL). Ca(2+) is bound by residues aspartate 20, asparagine 22, aspartate 24, lysine 26, glutamate 31, aspartate 55, aspartate 57, aspartate 59, and glutamate 66.

The chain is Polcalcin Aln g 4 from Alnus glutinosa (European alder).